The sequence spans 117 residues: Large ribosomal subunit protein bL19 (117 aa).

It belongs to the bacterial ribosomal protein bL19 family.

Its function is as follows. This protein is located at the 30S-50S ribosomal subunit interface and may play a role in the structure and function of the aminoacyl-tRNA binding site. This chain is Large ribosomal subunit protein bL19, found in Sorangium cellulosum (strain So ce56) (Polyangium cellulosum (strain So ce56)).